Here is a 258-residue protein sequence, read N- to C-terminus: Cholera enterotoxin subunit A (258 aa).

The N-terminal stretch at 1–18 is a signal peptide; the sequence is MVKIIFVFFIFLSSFSYA. Residues 25–28 and 41–43 each bind NAD(+); these read RADS and MPR. The active site involves Glu130. Cys205 and Cys217 are disulfide-bonded.

This sequence belongs to the enterotoxin A family. As to quaternary structure, the holotoxin (choleragen) consists of a pentameric ring of B subunits whose central pore is occupied by the A subunit. The A subunit contains two chains, A1 and A2, linked by a disulfide bridge. Interaction with the host protein ARF6 causes a conformation change so that the enterotoxin subunit A1 can bind NAD and catalyze the ADP-ribosylation of the host Gs alpha.

In terms of biological role, the A1 chain catalyzes the ADP-ribosylation of Gs alpha, a GTP-binding regulatory protein, to activate the adenylate cyclase. This leads to an overproduction of cAMP and eventually to a hypersecretion of chloride and bicarbonate followed by water, resulting in the characteristic cholera stool. The A2 chain tethers A1 to the pentameric ring. This is Cholera enterotoxin subunit A (ctxA) from Vibrio cholerae serotype O1 (strain ATCC 39315 / El Tor Inaba N16961).